The chain runs to 188 residues: mRNA transport factor GFD1 (188 aa).

Residues 1 to 128 (MPLESIWADA…KTQSKQDTAS (128 aa)) form a disordered region. The segment covering 18–28 (KQKPSHKRSNN) has biased composition (basic residues). Positions 29 to 44 (NKKNNNSRWSNESSSN) are enriched in low complexity. The span at 59–79 (GNHESKTKNKIKETLPREKKP) shows a compositional bias: basic and acidic residues. Phosphoserine is present on residues Ser87, Ser106, and Ser111. Low complexity predominate over residues 112–128 (PSKMKTTKTQSKQDTAS). The stretch at 119 to 164 (KTQSKQDTASKMKLLKKKIEEQREILQKTHHKNQQQQVLMDFLNDE) forms a coiled coil.

In terms of assembly, interacts with GLE1, NUP42, NAB2, ZDS1 and probably DBP5. Forms a complex with GLE1 and NAB2.

It is found in the cytoplasm. It localises to the nucleus. The protein resides in the nuclear pore complex. Its subcellular location is the nucleus membrane. Functionally, high-copy suppressor of mutant alleles of ATP-dependent RNA helicase DBP5, which is involved in mRNA export from the nucleus. It may also play an important role in a late stage of NAB2-mRNA export. The protein is mRNA transport factor GFD1 (GFD1) of Saccharomyces cerevisiae (strain ATCC 204508 / S288c) (Baker's yeast).